The primary structure comprises 106 residues: Heat shock protein HspQ (106 aa).

Residues 80–106 (DEHLDNDSMDELSQSIRNQLQAPRLRN) form a disordered region. Positions 90-100 (ELSQSIRNQLQ) are enriched in polar residues.

This sequence belongs to the HspQ family.

The protein resides in the cytoplasm. Involved in the degradation of certain denaturated proteins, including DnaA, during heat shock stress. The polypeptide is Heat shock protein HspQ (Proteus mirabilis (strain HI4320)).